A 141-amino-acid polypeptide reads, in one-letter code: Hemoglobin subunit alpha-A/Q/R/T (141 aa).

The Globin domain occupies 1–141 (VLSPADKTNV…VSTVLTSKYR (141 aa)). Phosphoserine is present on Ser3. Lys7 is modified (N6-succinyllysine). Thr8 carries the post-translational modification Phosphothreonine. Lys11 carries the N6-succinyllysine modification. Residue Lys16 is modified to N6-acetyllysine; alternate. Lys16 is modified (N6-succinyllysine; alternate). Tyr24 carries the phosphotyrosine modification. Ser35 is modified (phosphoserine). The residue at position 40 (Lys40) is an N6-succinyllysine. Position 49 is a phosphoserine (Ser49). O2 is bound at residue His58. His87 contributes to the heme b binding site. Residue Ser102 is modified to Phosphoserine. Residue Thr108 is modified to Phosphothreonine. Phosphoserine is present on residues Ser124 and Ser131. Residues Thr134 and Thr137 each carry the phosphothreonine modification. Phosphoserine is present on Ser138.

Belongs to the globin family. In terms of assembly, heterotetramer of two alpha chains and two beta chains. In terms of tissue distribution, red blood cells.

Functionally, involved in oxygen transport from the lung to the various peripheral tissues. The chain is Hemoglobin subunit alpha-A/Q/R/T from Macaca fascicularis (Crab-eating macaque).